The chain runs to 202 residues: Heat shock 22 kDa protein, mitochondrial (202 aa).

The transit peptide at 1–31 directs the protein to the mitochondrion; the sequence is MASSLALKRFLSSGLLSSSFLRPVASSASRS. The region spanning 94–202 is the sHSP domain; that stretch reads VLSAASRRGW…RNNVINVKVD (109 aa).

The protein belongs to the small heat shock protein (HSP20) family.

It localises to the mitochondrion. This is Heat shock 22 kDa protein, mitochondrial (HSP22) from Pisum sativum (Garden pea).